A 304-amino-acid polypeptide reads, in one-letter code: MATRNEEILRKPDWLKIKLNTNDNYTGLKKMMREKNLHTVCEEAKCPNIHECWGARRTATFMILGAVCTRACRFCAVKTGLPNELDLNEPERVAESVELMNLKHVVITAVARDDLRDQGSNVYAETVRKVRERNPFTTIEILPSDMGGDYEALETLMASRPDILNHNIETVRRLTPRVRARATYDRTLQFLRRSKELQPDIPTKSSLMVGLGETMEEIYETMDDLRANDVDILTIGQYLQPSRKHLKVEKYYTPLEFGKMRKIAMEKGFKHCQAGPLVRSSYHADEQVNEAAKEKQRQGEEQLN.

Residues Cys41, Cys46, Cys52, Cys68, Cys72, Cys75, and Ser281 each contribute to the [4Fe-4S] cluster site. In terms of domain architecture, Radical SAM core spans 54-270; sequence GARRTATFMI…RKIAMEKGFK (217 aa). Positions 282 to 304 are disordered; sequence YHADEQVNEAAKEKQRQGEEQLN.

This sequence belongs to the radical SAM superfamily. Lipoyl synthase family. The cofactor is [4Fe-4S] cluster.

It localises to the cytoplasm. The enzyme catalyses [[Fe-S] cluster scaffold protein carrying a second [4Fe-4S](2+) cluster] + N(6)-octanoyl-L-lysyl-[protein] + 2 oxidized [2Fe-2S]-[ferredoxin] + 2 S-adenosyl-L-methionine + 4 H(+) = [[Fe-S] cluster scaffold protein] + N(6)-[(R)-dihydrolipoyl]-L-lysyl-[protein] + 4 Fe(3+) + 2 hydrogen sulfide + 2 5'-deoxyadenosine + 2 L-methionine + 2 reduced [2Fe-2S]-[ferredoxin]. The protein operates within protein modification; protein lipoylation via endogenous pathway; protein N(6)-(lipoyl)lysine from octanoyl-[acyl-carrier-protein]. Functionally, catalyzes the radical-mediated insertion of two sulfur atoms into the C-6 and C-8 positions of the octanoyl moiety bound to the lipoyl domains of lipoate-dependent enzymes, thereby converting the octanoylated domains into lipoylated derivatives. The sequence is that of Lipoyl synthase from Staphylococcus epidermidis (strain ATCC 35984 / DSM 28319 / BCRC 17069 / CCUG 31568 / BM 3577 / RP62A).